Reading from the N-terminus, the 471-residue chain is NADH-quinone oxidoreductase subunit N (471 aa).

Transmembrane regions (helical) follow at residues 6 to 26 (FILPEIFISLSIMFLLLLGVY), 30 to 50 (SSNIVHNLAVGSLLITGILIF), 70 to 90 (LSSFMKILTILGGAFVLSIST), 98 to 118 (IFLIEYPVLILSSILGMMVMI), 123 to 143 (LMVFYIGLELQSLALYVLASF), 158 to 178 (FVLSALSSGLLLYGCSLVYGF), 198 to 218 (LTFGIVFILVGLAFKISAVPF), 230 to 250 (PTAVTLFFAIVPKVAALTVFI), 264 to 284 (WQPILIFLSIASMIFGAIAAI), 292 to 312 (LIAYSSIGHMGYALAGLSTGS), 320 to 340 (IVYMSIYLVMNLAFFSCLLML), 365 to 385 (LSLLAILFSLAGIPPLAGFFA), 400 to 420 (FLAIVGLLSTVIAAFYYLKII), and 438 to 458 (IWLKGSLTFSTLLILLYFIFP).

The protein belongs to the complex I subunit 2 family. In terms of assembly, NDH-1 is composed of 14 different subunits. Subunits NuoA, H, J, K, L, M, N constitute the membrane sector of the complex.

The protein resides in the cell inner membrane. It catalyses the reaction a quinone + NADH + 5 H(+)(in) = a quinol + NAD(+) + 4 H(+)(out). NDH-1 shuttles electrons from NADH, via FMN and iron-sulfur (Fe-S) centers, to quinones in the respiratory chain. The immediate electron acceptor for the enzyme in this species is believed to be ubiquinone. Couples the redox reaction to proton translocation (for every two electrons transferred, four hydrogen ions are translocated across the cytoplasmic membrane), and thus conserves the redox energy in a proton gradient. The polypeptide is NADH-quinone oxidoreductase subunit N (Pelagibacter ubique (strain HTCC1062)).